The chain runs to 390 residues: Probable tRNA sulfurtransferase (390 aa).

The region spanning 60 to 162 is the THUMP domain; sequence KQIIDDLKEV…YDCAIVYGHK (103 aa). Residues 180–181, 205–206, Arg264, Gly286, and Gln295 contribute to the ATP site; these read LL and TF.

It belongs to the ThiI family.

It is found in the cytoplasm. It catalyses the reaction [ThiI sulfur-carrier protein]-S-sulfanyl-L-cysteine + a uridine in tRNA + 2 reduced [2Fe-2S]-[ferredoxin] + ATP + H(+) = [ThiI sulfur-carrier protein]-L-cysteine + a 4-thiouridine in tRNA + 2 oxidized [2Fe-2S]-[ferredoxin] + AMP + diphosphate. It carries out the reaction [ThiS sulfur-carrier protein]-C-terminal Gly-Gly-AMP + S-sulfanyl-L-cysteinyl-[cysteine desulfurase] + AH2 = [ThiS sulfur-carrier protein]-C-terminal-Gly-aminoethanethioate + L-cysteinyl-[cysteine desulfurase] + A + AMP + 2 H(+). It participates in cofactor biosynthesis; thiamine diphosphate biosynthesis. Its function is as follows. Catalyzes the ATP-dependent transfer of a sulfur to tRNA to produce 4-thiouridine in position 8 of tRNAs, which functions as a near-UV photosensor. Also catalyzes the transfer of sulfur to the sulfur carrier protein ThiS, forming ThiS-thiocarboxylate. This is a step in the synthesis of thiazole, in the thiamine biosynthesis pathway. The sulfur is donated as persulfide by IscS. In Ureaplasma parvum serovar 3 (strain ATCC 27815 / 27 / NCTC 11736), this protein is Probable tRNA sulfurtransferase.